The sequence spans 423 residues: Maltoporin 1 (423 aa).

A signal peptide spans 1–24; the sequence is MITLRKLPIALAVAAGVLSTQAMA.

The protein belongs to the porin LamB (TC 1.B.3) family. As to quaternary structure, homotrimer formed of three 18-stranded antiparallel beta-barrels, containing three independent channels.

Its subcellular location is the cell outer membrane. It catalyses the reaction beta-maltose(in) = beta-maltose(out). In terms of biological role, involved in the transport of maltose and maltodextrins. In Yersinia pestis bv. Antiqua (strain Antiqua), this protein is Maltoporin 1.